We begin with the raw amino-acid sequence, 361 residues long: Deoxyhypusine hydroxylase (361 aa).

HEAT-like PBS-type repeat units follow at residues Leu59–Asn85, Val94–Asp120, Gln183–Asp211, and Phe216–Asp242. Fe cation contacts are provided by His61, Glu62, His96, and Glu97. Positions 218, 219, 251, and 252 each coordinate Fe cation.

The protein belongs to the deoxyhypusine hydroxylase family. Requires Fe(2+) as cofactor.

The protein localises to the cytoplasm. Its subcellular location is the nucleus. The enzyme catalyses [eIF5A protein]-deoxyhypusine + AH2 + O2 = [eIF5A protein]-hypusine + A + H2O. It participates in protein modification; eIF5A hypusination. Catalyzes the hydroxylation of the N(6)-(4-aminobutyl)-L-lysine intermediate to form hypusine, an essential post-translational modification only found in mature eIF-5A factor. This chain is Deoxyhypusine hydroxylase, found in Cryptococcus neoformans var. neoformans serotype D (strain B-3501A) (Filobasidiella neoformans).